We begin with the raw amino-acid sequence, 247 residues long: 5-oxoprolinase subunit A (247 aa).

Belongs to the LamB/PxpA family. As to quaternary structure, forms a complex composed of PxpA, PxpB and PxpC.

The catalysed reaction is 5-oxo-L-proline + ATP + 2 H2O = L-glutamate + ADP + phosphate + H(+). Its function is as follows. Catalyzes the cleavage of 5-oxoproline to form L-glutamate coupled to the hydrolysis of ATP to ADP and inorganic phosphate. The protein is 5-oxoprolinase subunit A of Vibrio vulnificus (strain CMCP6).